A 375-amino-acid polypeptide reads, in one-letter code: Growth/differentiation factor 8 (375 aa).

The signal sequence occupies residues 1–18 (MQKLQISVYIYLFMLIVA). A propeptide spanning residues 19-266 (GPVDLNEKSE…VTDTPKRSRR (248 aa)) is cleaved from the precursor. 2 N-linked (GlcNAc...) asparagine glycosylation sites follow: Asn47 and Asn71. 4 cysteine pairs are disulfide-bonded: Cys272–Cys282, Cys281–Cys340, Cys309–Cys372, and Cys313–Cys374.

It belongs to the TGF-beta family. Homodimer; disulfide-linked. Interacts with WFIKKN2, leading to inhibit its activity. Interacts with FSTL3. Post-translationally, synthesized as large precursor molecule that undergoes proteolytic cleavage to generate an N-terminal propeptide and a disulfide linked C-terminal dimer, which is the biologically active molecule. The circulating form consists of a latent complex of the C-terminal dimer and other proteins, including its propeptide, which maintain the C-terminal dimer in a latent, inactive state. Ligand activation requires additional cleavage of the prodomain by a tolloid-like metalloproteinase.

It is found in the secreted. Its function is as follows. Acts specifically as a negative regulator of skeletal muscle growth. The sequence is that of Growth/differentiation factor 8 (MSTN) from Taurotragus derbianus (Giant eland).